The chain runs to 359 residues: Pyruvate dehydrogenase E1 component subunit beta, mitochondrial (359 aa).

Residues 1-30 constitute a mitochondrion transit peptide; sequence MAVVAGLVRGPLRQASGLLKRRFHRSAPAA. Y67 carries the post-translational modification Phosphotyrosine. E89 is a thiamine diphosphate binding site. I142, A190, I191, D193, and N195 together coordinate K(+). K354 is modified (N6-acetyllysine).

Heterotetramer of two PDHA1 and two PDHB subunits. The heterotetramer interacts with DLAT, and is part of the multimeric pyruvate dehydrogenase complex that contains multiple copies of pyruvate dehydrogenase (E1), dihydrolipoamide acetyltransferase (DLAT, E2) and lipoamide dehydrogenase (DLD, E3). These subunits are bound to an inner core composed of about 48 DLAT and 12 PDHX molecules. Interacts with DLAT. The cofactor is thiamine diphosphate.

Its subcellular location is the mitochondrion matrix. The catalysed reaction is N(6)-[(R)-lipoyl]-L-lysyl-[protein] + pyruvate + H(+) = N(6)-[(R)-S(8)-acetyldihydrolipoyl]-L-lysyl-[protein] + CO2. Its function is as follows. The pyruvate dehydrogenase complex catalyzes the overall conversion of pyruvate to acetyl-CoA and CO(2), and thereby links the glycolytic pathway to the tricarboxylic cycle. The chain is Pyruvate dehydrogenase E1 component subunit beta, mitochondrial (Pdhb) from Mus musculus (Mouse).